Reading from the N-terminus, the 347-residue chain is UDP-N-acetylglucosamine--N-acetylmuramyl-(pentapeptide) pyrophosphoryl-undecaprenol N-acetylglucosamine transferase (347 aa).

UDP-N-acetyl-alpha-D-glucosamine-binding positions include 11–13 (TGG), asparagine 122, arginine 163, serine 189, and glutamine 279.

The protein belongs to the glycosyltransferase 28 family. MurG subfamily.

The protein localises to the cell inner membrane. The enzyme catalyses di-trans,octa-cis-undecaprenyl diphospho-N-acetyl-alpha-D-muramoyl-L-alanyl-D-glutamyl-meso-2,6-diaminopimeloyl-D-alanyl-D-alanine + UDP-N-acetyl-alpha-D-glucosamine = di-trans,octa-cis-undecaprenyl diphospho-[N-acetyl-alpha-D-glucosaminyl-(1-&gt;4)]-N-acetyl-alpha-D-muramoyl-L-alanyl-D-glutamyl-meso-2,6-diaminopimeloyl-D-alanyl-D-alanine + UDP + H(+). Its pathway is cell wall biogenesis; peptidoglycan biosynthesis. Functionally, cell wall formation. Catalyzes the transfer of a GlcNAc subunit on undecaprenyl-pyrophosphoryl-MurNAc-pentapeptide (lipid intermediate I) to form undecaprenyl-pyrophosphoryl-MurNAc-(pentapeptide)GlcNAc (lipid intermediate II). This chain is UDP-N-acetylglucosamine--N-acetylmuramyl-(pentapeptide) pyrophosphoryl-undecaprenol N-acetylglucosamine transferase, found in Sulfurihydrogenibium sp. (strain YO3AOP1).